We begin with the raw amino-acid sequence, 318 residues long: NADH-ubiquinone oxidoreductase chain 1 (318 aa).

Helical transmembrane passes span 3-23 (FVNL…LTLL), 68-88 (LILF…MWIP), 102-122 (ILFM…SGWA), 146-166 (LAII…STLI), 171-191 (HIWL…STLA), 222-242 (LFFL…TILF), 253-273 (EMYT…FLWI), and 294-314 (LPLT…LASI).

Belongs to the complex I subunit 1 family.

It localises to the mitochondrion inner membrane. The enzyme catalyses a ubiquinone + NADH + 5 H(+)(in) = a ubiquinol + NAD(+) + 4 H(+)(out). In terms of biological role, core subunit of the mitochondrial membrane respiratory chain NADH dehydrogenase (Complex I) that is believed to belong to the minimal assembly required for catalysis. Complex I functions in the transfer of electrons from NADH to the respiratory chain. The immediate electron acceptor for the enzyme is believed to be ubiquinone. The protein is NADH-ubiquinone oxidoreductase chain 1 (MT-ND1) of Nyctalus plancyi velutinus (Fine-haired noctule).